The following is a 160-amino-acid chain: Phosphopantetheine adenylyltransferase (160 aa).

A substrate-binding site is contributed by threonine 10. ATP contacts are provided by residues 10–11 (TF) and histidine 18. The substrate site is built by lysine 42, leucine 74, and arginine 88. Residues 89–91 (GLR), glutamate 99, and 124–130 (NSFISST) each bind ATP.

It belongs to the bacterial CoaD family. Homohexamer. Mg(2+) is required as a cofactor.

The protein localises to the cytoplasm. It carries out the reaction (R)-4'-phosphopantetheine + ATP + H(+) = 3'-dephospho-CoA + diphosphate. Its pathway is cofactor biosynthesis; coenzyme A biosynthesis; CoA from (R)-pantothenate: step 4/5. In terms of biological role, reversibly transfers an adenylyl group from ATP to 4'-phosphopantetheine, yielding dephospho-CoA (dPCoA) and pyrophosphate. This Aeromonas hydrophila subsp. hydrophila (strain ATCC 7966 / DSM 30187 / BCRC 13018 / CCUG 14551 / JCM 1027 / KCTC 2358 / NCIMB 9240 / NCTC 8049) protein is Phosphopantetheine adenylyltransferase.